A 362-amino-acid polypeptide reads, in one-letter code: Porin Omp2b (362 aa).

An N-terminal signal peptide occupies residues 1 to 22; sequence MNIKSLLLGSAAALVAASGAQA.

Belongs to the alphaproteobacteria porin family. Homotrimer.

It localises to the cell outer membrane. In terms of biological role, forms passive diffusion pores that allow small molecular weight hydrophilic materials across the outer membrane. In Brucella canis (strain ATCC 23365 / NCTC 10854 / RM-666), this protein is Porin Omp2b (omp2b).